Here is a 222-residue protein sequence, read N- to C-terminus: Phosphatidylinositol phosphate synthase (222 aa).

31-34 (DIVT) provides a ligand contact to a CDP-1,2-diacyl-sn-glycerol. 2 helical membrane passes run 32-49 (IVTLAGTAAAVIGALTLF) and 55-74 (WWGAVVVSFFVLADMLDGAM). Mg(2+) contacts are provided by Asp-68 and Asp-71. A CDP-1,2-diacyl-sn-glycerol is bound by residues Gly-72, Arg-76, and Thr-82. Mg(2+)-binding residues include Asp-89 and Asp-93. Asp-93 (proton acceptor) is an active-site residue. The next 4 helical transmembrane spans lie at 95–112 (LGDGAVFAGLTWWAAFGL), 118–136 (VVATLICLVTSQVISYIKA), 156–173 (LVIVLIGAGLSDLPFFPL), and 179–196 (VAMWVLAVASVVTLLQRV).

The protein belongs to the CDP-alcohol phosphatidyltransferase class-I family. Homodimer. Requires Mg(2+) as cofactor.

Its subcellular location is the cell membrane. The protein resides in the secreted. It is found in the cell wall. It carries out the reaction a CDP-1,2-diacyl-sn-glycerol + 1D-myo-inositol 3-phosphate = a 1,2-diacyl-sn-glycero-3-phospho-(1D-myo-inositol-3-phosphate) + CMP + H(+). The catalysed reaction is 1,2-di-(9Z-octadecenoyl)-sn-glycero-3-cytidine-5'-diphosphate + 1D-myo-inositol 3-phosphate = 1,2-di-(9Z-octadecenoyl)-sn-glycero-3-phospho-(1D-myo-inositol-3-phosphate) + CMP + H(+). It catalyses the reaction 1,2-dihexadecanoyl-sn-glycero-3-CDP + 1D-myo-inositol 3-phosphate = 1,2-dihexadecanoyl-sn-glycero-3-phospho-(1D-myo-inositol-3-phosphate) + CMP + H(+). Its pathway is phospholipid metabolism; phosphatidylinositol phosphate biosynthesis. Competitively inhibited by several inositol 1-phosphate analogs, including the phosphonate analog 1-deoxy-1-phosphonomethyl-myo-inositol (Ino-C-P). This leads to inhibition of M.smegmatis growth. Its function is as follows. Catalyzes the conjugation of the 1'-hydroxyl group of D-myo-inositol-3-phosphate (also named L-myo-inositol-1-phosphate) with a lipid tail of cytidine diphosphate diacylglycerol (CDP-DAG), forming phosphatidylinositol phosphate (PIP) and CMP. PIP is a precursor of phosphatidylinositol (PI) which is an essential lipid for mycobacteria required for formation of their cell wall. Is essential to the survival of M.smegmatis. This is Phosphatidylinositol phosphate synthase from Mycolicibacterium smegmatis (strain ATCC 700084 / mc(2)155) (Mycobacterium smegmatis).